A 183-amino-acid polypeptide reads, in one-letter code: Glutamyl-tRNA(Gln) amidotransferase subunit F, mitochondrial (183 aa).

The N-terminal 23 residues, 1–23 (MSRMLNQIPRLITRSFRTSSVGY), are a transit peptide targeting the mitochondrion.

The protein belongs to the GatF family. In terms of assembly, subunit of the heterotrimeric GatFAB amidotransferase (AdT) complex, composed of A, B and F subunits.

It localises to the mitochondrion inner membrane. The catalysed reaction is L-glutamyl-tRNA(Gln) + L-glutamine + ATP + H2O = L-glutaminyl-tRNA(Gln) + L-glutamate + ADP + phosphate + H(+). Functionally, allows the formation of correctly charged Gln-tRNA(Gln) through the transamidation of misacylated Glu-tRNA(Gln) in the mitochondria. The reaction takes place in the presence of glutamine and ATP through an activated gamma-phospho-Glu-tRNA(Gln). Required for proper protein synthesis within the mitochondrion. The sequence is that of Glutamyl-tRNA(Gln) amidotransferase subunit F, mitochondrial from Debaryomyces hansenii (strain ATCC 36239 / CBS 767 / BCRC 21394 / JCM 1990 / NBRC 0083 / IGC 2968) (Yeast).